Consider the following 257-residue polypeptide: tRNA pseudouridine synthase A (257 aa).

Asp53 acts as the Nucleophile in catalysis. Tyr111 is a substrate binding site.

The protein belongs to the tRNA pseudouridine synthase TruA family. Homodimer.

It catalyses the reaction uridine(38/39/40) in tRNA = pseudouridine(38/39/40) in tRNA. Its function is as follows. Formation of pseudouridine at positions 38, 39 and 40 in the anticodon stem and loop of transfer RNAs. The sequence is that of tRNA pseudouridine synthase A from Xylella fastidiosa (strain M12).